The primary structure comprises 478 residues: NAD-dependent malic enzyme (478 aa).

In terms of domain architecture, ACT spans 12-86 (TIRLQFEKDI…GVKIVNVSDR (75 aa)). Catalysis depends on Tyr114, which acts as the Proton donor. Lys169 functions as the Proton acceptor in the catalytic mechanism. A divalent metal cation contacts are provided by Glu211, Asp212, and Asp237. Residues 270-273 (IGAA), Asn363, and Asn393 each bind NAD(+).

Belongs to the malic enzymes family. As to quaternary structure, homotetramer. Requires Mg(2+) as cofactor. Mn(2+) is required as a cofactor.

The enzyme catalyses (S)-malate + NAD(+) = pyruvate + CO2 + NADH. It catalyses the reaction oxaloacetate + H(+) = pyruvate + CO2. With respect to regulation, the activity is enhanced 5-7 times by ammonium and potassium. Functionally, in addition to the NAD-dependent oxidative decarboxylation of L-malate, the enzyme catalyzes the decarboxylation of oxaloacetate. This chain is NAD-dependent malic enzyme, found in Geobacillus stearothermophilus (Bacillus stearothermophilus).